We begin with the raw amino-acid sequence, 276 residues long: Methylesterase 17 (276 aa).

The AB hydrolase-1 domain occupies 19-138 (PHFVLIHGMS…TDEDMKDGVP (120 aa)). The active-site Acyl-ester intermediate is the Ser95. Residues Asp225 and His252 each act as charge relay system in the active site.

Belongs to the AB hydrolase superfamily. Methylesterase family. Expressed in several tissues of seedlings and adult plants, with a higher relative level of expression in the seedling shoot apex and the adult stem.

It carries out the reaction methyl (indol-3-yl)acetate + H2O = (indol-3-yl)acetate + methanol + H(+). It functions in the pathway plant hormone biosynthesis. Methylesterase that efficiently and specifically hydrolyzes methyl indole-3-acetic acid (MeIAA) to IAA (auxin). MeIAA is believed to be an inactive form of auxin that needs to be demethylated to exert a biological effect. The chain is Methylesterase 17 from Arabidopsis thaliana (Mouse-ear cress).